The sequence spans 184 residues: Probable RNA 2'-phosphotransferase (184 aa).

It belongs to the KptA/TPT1 family.

In terms of biological role, removes the 2'-phosphate from RNA via an intermediate in which the phosphate is ADP-ribosylated by NAD followed by a presumed transesterification to release the RNA and generate ADP-ribose 1''-2''-cyclic phosphate (APPR&gt;P). May function as an ADP-ribosylase. The protein is Probable RNA 2'-phosphotransferase of Escherichia coli O9:H4 (strain HS).